The primary structure comprises 391 residues: GTPase HflX (391 aa).

Residues L162–E181 form a disordered region. The Hflx-type G domain maps to K222–K391. Residues G228–S235, F253–D257, D278–G281, N344–D347, and S369–T371 each bind GTP. Residues S235 and T255 each contribute to the Mg(2+) site.

The protein belongs to the TRAFAC class OBG-HflX-like GTPase superfamily. HflX GTPase family. As to quaternary structure, monomer. Associates with the 50S ribosomal subunit. Mg(2+) is required as a cofactor.

The protein resides in the cytoplasm. In terms of biological role, GTPase that associates with the 50S ribosomal subunit and may have a role during protein synthesis or ribosome biogenesis. In Treponema denticola (strain ATCC 35405 / DSM 14222 / CIP 103919 / JCM 8153 / KCTC 15104), this protein is GTPase HflX.